Here is a 73-residue protein sequence, read N- to C-terminus: Kappa-scoloptoxin(03)-Ssm1c (73 aa).

An N-terminal signal peptide occupies residues 1–23 (MKSWMAILLVMALIIFTLDNCYS). Intrachain disulfides connect Cys-32/Cys-58, Cys-41/Cys-57, and Cys-44/Cys-67.

This sequence belongs to the scoloptoxin family. In terms of tissue distribution, expressed by the venom gland.

It localises to the secreted. Inhibits voltage-gated potassium channels. The protein is Kappa-scoloptoxin(03)-Ssm1c of Scolopendra mutilans (Chinese red-headed centipede).